The sequence spans 88 residues: Putative cancer susceptibility gene HEPN1 protein (88 aa).

In terms of tissue distribution, expressed in liver. Expression is either down-regulated or lost in hepatocellular carcinomas (HCC).

It localises to the cytoplasm. This is Putative cancer susceptibility gene HEPN1 protein (HEPN1) from Homo sapiens (Human).